A 357-amino-acid chain; its full sequence is Queuosine-tRNA galactosyltransferase (357 aa).

It belongs to the glycosyltransferase 2 family.

Its subcellular location is the cytoplasm. It catalyses the reaction queuosine(34) in tRNA(Tyr) + UDP-alpha-D-galactose = O-5''-beta-D-galactosylqueuosine(34) in tRNA(Tyr) + UDP + H(+). Functionally, glycosyltransferase that specifically catalyzes galactosylation of cytoplasmic tRNA(Tyr) modified with queuosine at position 34 (queuosine(34)). Galactosylates the cyclopentene hydroxyl group of queuosine(34) in tRNA(Tyr) to form galactosyl-queuosine(34). Mannosylation of queuosine(34) in tRNA(Tyr) is required to slow-down elongation at cognate codons UAC and suppress stop codon readthrough, thereby regulating protein translation. The sequence is that of Queuosine-tRNA galactosyltransferase from Rattus norvegicus (Rat).